A 503-amino-acid chain; its full sequence is TGF-beta receptor type-1 (503 aa).

The N-terminal stretch at 1-29 (MEVAAGAPRSRLLLFVLAATATLAPEATA) is a signal peptide. Residues 30 to 126 (FQCFCHLCTK…PPSGLGPVEL (97 aa)) lie on the Extracellular side of the membrane. 5 disulfides stabilise this stretch: cysteine 32-cysteine 50, cysteine 34-cysteine 37, cysteine 44-cysteine 67, cysteine 82-cysteine 96, and cysteine 97-cysteine 102. Residue asparagine 41 is glycosylated (N-linked (GlcNAc...) asparagine). A helical transmembrane segment spans residues 127–147 (AAVIAGPVCFVCISLMLMVYI). Residues 148 to 503 (CHNRTVIHHR…QLSQQEGIKM (356 aa)) lie on the Cytoplasmic side of the membrane. A Phosphoserine modification is found at serine 165. Positions 175–204 (TTLKDLIYDMTTSGSGSGLPLLVQRTIART) constitute a GS domain. 2 positions are modified to phosphothreonine; by TGFBR2: threonine 185 and threonine 186. 3 positions are modified to phosphoserine; by TGFBR2: serine 187, serine 189, and serine 191. The FKBP1A-binding motif lies at 193 to 194 (LP). The Protein kinase domain occupies 205 to 495 (IVLQESIGKG…LRIKKTLSQL (291 aa)). Residues 211-219 (IGKGRFGEV) and lysine 232 contribute to the ATP site. Catalysis depends on aspartate 333, which acts as the Proton acceptor. A Glycyl lysine isopeptide (Lys-Gly) (interchain with G-Cter in SUMO) cross-link involves residue lysine 391.

Belongs to the protein kinase superfamily. TKL Ser/Thr protein kinase family. TGFB receptor subfamily. Homodimer; in the endoplasmic reticulum but also at the cell membrane. Heterohexamer; TGFB1, TGFB2 and TGFB3 homodimeric ligands assemble a functional receptor composed of two TGFBR1 and TGFBR2 heterodimers to form a ligand-receptor heterohexamer. The respective affinity of TGBRB1 and TGFBR2 for the ligands may modulate the kinetics of assembly of the receptor and may explain the different biological activities of TGFB1, TGFB2 and TGFB3. Component of a complex composed of TSC22D1 (via N-terminus), TGFBR1 and TGFBR2; the interaction between TSC22D1 and TGFBR1 is inhibited by SMAD7 and promoted by TGFB1. Interacts with CD109; inhibits TGF-beta receptor activation in keratinocytes. Interacts with RBPMS. Interacts (unphosphorylated) with FKBP1A; prevents TGFBR1 phosphorylation by TGFBR2 and stabilizes it in the inactive conformation. Interacts with SMAD2, SMAD3 and ZFYVE9; ZFYVE9 recruits SMAD2 and SMAD3 to the TGF-beta receptor. Interacts with TRAF6 and MAP3K7; induces MAP3K7 activation by TRAF6. Interacts with PARD6A; involved in TGF-beta induced epithelial to mesenchymal transition. Interacts with NEDD4L. Interacts with SMAD7, SMURF1 and SMURF2; SMAD7 recruits NEDD4L, SMURF1 and SMURF2 to the TGF-beta receptor. Interacts with USP15 and VPS39. Interacts with SDCBP (via C-terminus). Interacts with CAV1 and this interaction is impaired in the presence of SDCBP. Interacts with APPL1; interaction is TGF beta dependent; mediates trafficking of the TGFBR1 from the endosomes to the nucleus via microtubules in a TRAF6-dependent manner. Interacts with GPR50; this interaction promotes the constitutive activation of SMAD signaling pathway. Requires Mg(2+) as cofactor. Mn(2+) serves as cofactor. Post-translationally, phosphorylated at basal levels in the absence of ligand. Activated upon phosphorylation by TGFBR2, mainly in the GS domain. Phosphorylation in the GS domain abrogates FKBP1A-binding. N-Glycosylated. In terms of processing, ubiquitinated; undergoes ubiquitination catalyzed by several E3 ubiquitin ligases including SMURF1, SMURF2 and NEDD4L2. Results in the proteasomal and/or lysosomal degradation of the receptor thereby negatively regulating its activity. Deubiquitinated by USP15, leading to stabilization of the protein and enhanced TGF-beta signal. Its ubiquitination and proteasome-mediated degradation is negatively regulated by SDCBP.

The protein resides in the cell membrane. It localises to the cell junction. The protein localises to the tight junction. It is found in the membrane raft. Its subcellular location is the cell surface. It catalyses the reaction L-threonyl-[receptor-protein] + ATP = O-phospho-L-threonyl-[receptor-protein] + ADP + H(+). The catalysed reaction is L-seryl-[receptor-protein] + ATP = O-phospho-L-seryl-[receptor-protein] + ADP + H(+). Its activity is regulated as follows. Kept in an inactive conformation by FKBP1A preventing receptor activation in absence of ligand. CD109 is another inhibitor of the receptor. Its function is as follows. Transmembrane serine/threonine kinase forming with the TGF-beta type II serine/threonine kinase receptor, TGFBR2, the non-promiscuous receptor for the TGF-beta cytokines TGFB1, TGFB2 and TGFB3. Transduces the TGFB1, TGFB2 and TGFB3 signal from the cell surface to the cytoplasm and is thus regulating a plethora of physiological and pathological processes including cell cycle arrest in epithelial and hematopoietic cells, control of mesenchymal cell proliferation and differentiation, wound healing, extracellular matrix production, immunosuppression and carcinogenesis. The formation of the receptor complex composed of 2 TGFBR1 and 2 TGFBR2 molecules symmetrically bound to the cytokine dimer results in the phosphorylation and the activation of TGFBR1 by the constitutively active TGFBR2. Activated TGFBR1 phosphorylates SMAD2 which dissociates from the receptor and interacts with SMAD4. The SMAD2-SMAD4 complex is subsequently translocated to the nucleus where it modulates the transcription of the TGF-beta-regulated genes. This constitutes the canonical SMAD-dependent TGF-beta signaling cascade. Also involved in non-canonical, SMAD-independent TGF-beta signaling pathways. For instance, TGFBR1 induces TRAF6 autoubiquitination which in turn results in MAP3K7 ubiquitination and activation to trigger apoptosis. Also regulates epithelial to mesenchymal transition through a SMAD-independent signaling pathway through PARD6A phosphorylation and activation. The sequence is that of TGF-beta receptor type-1 (TGFBR1) from Sus scrofa (Pig).